The sequence spans 382 residues: ATP phosphoribosyltransferase regulatory subunit (382 aa).

This sequence belongs to the class-II aminoacyl-tRNA synthetase family. HisZ subfamily. As to quaternary structure, heteromultimer composed of HisG and HisZ subunits.

The protein resides in the cytoplasm. It functions in the pathway amino-acid biosynthesis; L-histidine biosynthesis; L-histidine from 5-phospho-alpha-D-ribose 1-diphosphate: step 1/9. In terms of biological role, required for the first step of histidine biosynthesis. May allow the feedback regulation of ATP phosphoribosyltransferase activity by histidine. This chain is ATP phosphoribosyltransferase regulatory subunit, found in Burkholderia cenocepacia (strain HI2424).